The sequence spans 217 residues: 7-cyano-7-deazaguanine synthase (217 aa).

Position 7–17 (7–17) interacts with ATP; it reads LSGGMDSTTLL. Zn(2+) contacts are provided by cysteine 183, cysteine 191, cysteine 194, and cysteine 197.

It belongs to the QueC family. Zn(2+) serves as cofactor.

It catalyses the reaction 7-carboxy-7-deazaguanine + NH4(+) + ATP = 7-cyano-7-deazaguanine + ADP + phosphate + H2O + H(+). The protein operates within purine metabolism; 7-cyano-7-deazaguanine biosynthesis. In terms of biological role, catalyzes the ATP-dependent conversion of 7-carboxy-7-deazaguanine (CDG) to 7-cyano-7-deazaguanine (preQ(0)). The polypeptide is 7-cyano-7-deazaguanine synthase (Methanoregula boonei (strain DSM 21154 / JCM 14090 / 6A8)).